We begin with the raw amino-acid sequence, 245 residues long: Demethylmenaquinone methyltransferase (245 aa).

S-adenosyl-L-methionine contacts are provided by residues Thr-70, Asp-90, and 118–119 (DC).

Belongs to the class I-like SAM-binding methyltransferase superfamily. MenG/UbiE family.

The catalysed reaction is a 2-demethylmenaquinol + S-adenosyl-L-methionine = a menaquinol + S-adenosyl-L-homocysteine + H(+). It functions in the pathway quinol/quinone metabolism; menaquinone biosynthesis; menaquinol from 1,4-dihydroxy-2-naphthoate: step 2/2. Methyltransferase required for the conversion of demethylmenaquinol (DMKH2) to menaquinol (MKH2). This chain is Demethylmenaquinone methyltransferase, found in Bacteroides fragilis (strain ATCC 25285 / DSM 2151 / CCUG 4856 / JCM 11019 / LMG 10263 / NCTC 9343 / Onslow / VPI 2553 / EN-2).